Here is a 141-residue protein sequence, read N- to C-terminus: HTH-type transcriptional repressor NsrR (141 aa).

Residues 2–129 (QLTSFTDYAL…DECTIESLLS (128 aa)) enclose the HTH rrf2-type domain. A DNA-binding region (H-T-H motif) is located at residues 28 to 51 (ITEVTDLFGVSRNHMVKVINRLGQ). C91, C96, and C102 together coordinate [2Fe-2S] cluster.

[2Fe-2S] cluster serves as cofactor.

Its function is as follows. Nitric oxide-sensitive repressor of genes involved in protecting the cell against nitrosative stress. May require iron for activity. This is HTH-type transcriptional repressor NsrR from Vibrio parahaemolyticus serotype O3:K6 (strain RIMD 2210633).